Consider the following 287-residue polypeptide: Bifunctional protein FolD 1 (287 aa).

Residues 170-172 (GRS) and S195 each bind NADP(+).

The protein belongs to the tetrahydrofolate dehydrogenase/cyclohydrolase family. Homodimer.

It catalyses the reaction (6R)-5,10-methylene-5,6,7,8-tetrahydrofolate + NADP(+) = (6R)-5,10-methenyltetrahydrofolate + NADPH. It carries out the reaction (6R)-5,10-methenyltetrahydrofolate + H2O = (6R)-10-formyltetrahydrofolate + H(+). Its pathway is one-carbon metabolism; tetrahydrofolate interconversion. Its function is as follows. Catalyzes the oxidation of 5,10-methylenetetrahydrofolate to 5,10-methenyltetrahydrofolate and then the hydrolysis of 5,10-methenyltetrahydrofolate to 10-formyltetrahydrofolate. The protein is Bifunctional protein FolD 1 of Streptomyces avermitilis (strain ATCC 31267 / DSM 46492 / JCM 5070 / NBRC 14893 / NCIMB 12804 / NRRL 8165 / MA-4680).